The sequence spans 713 residues: Subtilisin-like protease SBT4.9 (713 aa).

Residues 1–24 (MARRADSFCLISCVLVSFVISVSA) form the signal peptide. Residues 25 to 113 (VTDDSQDKQV…VFPDINYKLQ (89 aa)) constitute a propeptide, activation peptide. The region spanning 34 to 112 (VYVVYMGSLP…SVFPDINYKL (79 aa)) is the Inhibitor I9 domain. The region spanning 117–560 (SWDFLGLKEG…AGHVDPIAAI (444 aa)) is the Peptidase S8 domain. Asp-145 serves as the catalytic Charge relay system. A glycan (N-linked (GlcNAc...) asparagine) is linked at Asn-176. Catalysis depends on His-200, which acts as the Charge relay system. N-linked (GlcNAc...) asparagine glycans are attached at residues Asn-215 and Asn-223. In terms of domain architecture, PA spans 356-415 (NYPLYGGSTDGPLLRGKILVSEDKVSSEIVVANINENYHDYAYVSILPSSALSKDDFDSV). The N-linked (GlcNAc...) asparagine glycan is linked to Asn-420. Ser-499 acts as the Charge relay system in catalysis. N-linked (GlcNAc...) asparagine glycosylation is found at Asn-536, Asn-583, Asn-627, and Asn-637.

This sequence belongs to the peptidase S8 family. In terms of processing, the C-terminal propeptide is autocleaved.

Its subcellular location is the secreted. The polypeptide is Subtilisin-like protease SBT4.9 (Arabidopsis thaliana (Mouse-ear cress)).